A 407-amino-acid chain; its full sequence is D-mannose isomerase (407 aa).

Active-site proton donor/acceptor residues include H251 and H383.

Belongs to the N-acylglucosamine 2-epimerase family. Homodimer.

The enzyme catalyses D-mannose = D-fructose. The catalysed reaction is D-lyxose = D-xylulose. With respect to regulation, significantly inhibited by divalent metal ions such as Cu(2+), Cd(2+) or Ca(2+). In terms of biological role, catalyzes the reversible isomerization of D-mannose to D-fructose. Shows weaker activity on D-lyxose, but cannot use N-acetyl D-glucosamine. This chain is D-mannose isomerase, found in Thermobifida fusca (Thermomonospora fusca).